We begin with the raw amino-acid sequence, 336 residues long: Dihydroorotate dehydrogenase (quinone) (336 aa).

FMN is bound by residues Ala62–Lys66 and Thr86. Lys66 serves as a coordination point for substrate. Asn111 to Phe115 is a substrate binding site. 2 residues coordinate FMN: Asn139 and Asn172. A substrate-binding site is contributed by Asn172. Ser175 acts as the Nucleophile in catalysis. Substrate is bound at residue Asn177. Residues Lys217 and Thr245 each contribute to the FMN site. Position 246–247 (Asn246–Thr247) interacts with substrate. Residues Gly268, Gly297, and Tyr318–Ser319 contribute to the FMN site.

The protein belongs to the dihydroorotate dehydrogenase family. Type 2 subfamily. Monomer. FMN serves as cofactor.

Its subcellular location is the cell membrane. It carries out the reaction (S)-dihydroorotate + a quinone = orotate + a quinol. It participates in pyrimidine metabolism; UMP biosynthesis via de novo pathway; orotate from (S)-dihydroorotate (quinone route): step 1/1. In terms of biological role, catalyzes the conversion of dihydroorotate to orotate with quinone as electron acceptor. The sequence is that of Dihydroorotate dehydrogenase (quinone) from Salmonella arizonae (strain ATCC BAA-731 / CDC346-86 / RSK2980).